The chain runs to 409 residues: Indian hedgehog protein (409 aa).

The first 23 residues, 1-23 (MQLPKVVLLLCAAALLLSGAVRG), serve as a signal peptide directing secretion. Cys-24 is lipidated: N-palmitoyl cysteine. Positions 89, 90, 95, 125, 126, 129, and 131 each coordinate Ca(2+). Residues His-140, Asp-147, and His-182 each contribute to the Zn(2+) site. Gly-197 carries the Cholesterol glycine ester lipid modification.

Belongs to the hedgehog family. As to quaternary structure, multimer. In terms of assembly, interacts with BOC and CDON. Interacts with PTCH1. Interacts with glypican GPC3. Post-translationally, cholesterylation is required for N-product targeting to lipid rafts and multimerization. In terms of processing, the C-terminal domain displays an autoproteolysis activity and a cholesterol transferase activity. Both activities result in the cleavage of the full-length protein and covalent attachment of a cholesterol moiety to the C-terminal of the newly generated N-product. The N-product is the active species in both local and long-range signaling, whereas the C-product is degraded in the endoplasmic reticulum. N-palmitoylation by HHAT of N-product is required for indian hedgehog protein N-product multimerization and full activity. In terms of tissue distribution, expressed in the marginal zone at early gastrulation. At stage 14, expression begins in the neural plate with expression becoming more prominent in the anterodorsal area at neural tube closure. At this stage, also expressed diffusely in the somitic and pre-somitic mesoderm. By the early tadpole (stages 28-30), expression is widespread throughout anterior structures with highest levels in the otic vesicle, the eye, and the branchial arches.

Its subcellular location is the cell membrane. It localises to the endoplasmic reticulum membrane. The protein localises to the golgi apparatus membrane. The protein resides in the secreted. It carries out the reaction glycyl-L-cysteinyl-[protein] + cholesterol + H(+) = [protein]-C-terminal glycyl cholesterol ester + N-terminal L-cysteinyl-[protein]. Signal involved in the early induction and patterning of anterodorsal ectoderm, nervous system and somites. Induces ectopic cement gland formation in embryos. It is involved in the regulation of endochondral skeleton formation, and the development of retinal pigment epithelium (RPE), photoreceptors and periocular tissues. Functionally, the C-terminal part of the indian hedgehog protein precursor displays an autoproteolysis and a cholesterol transferase activity. Both activities result in the cleavage of the full-length protein into two parts followed by the covalent attachment of a cholesterol moiety to the C-terminal of the newly generated N-product. Both activities occur in the endoplasmic reticulum. Its function is as follows. The dually lipidated indian hedgehog protein N-product is a morphogen which is essential for a variety of patterning events during development. Binds to the patched (PTCH1) receptor, which functions in association with smoothened (SMO), to activate the transcription of target genes. Signal involved in the early induction and patterning of anterodorsal ectoderm, nervous system and somites. Induces ectopic cement gland formation in embryos. This Xenopus laevis (African clawed frog) protein is Indian hedgehog protein.